The primary structure comprises 151 residues: MLKGFKEFLARGNIVDLAVAVVIGTAFTALVTKFTDSIITPLINRIGVNAQSDVGILRIGIGGGQTIDLNVLLSAAINFFLIAFAVYFLVVLPYNTLRKKGEVEQPGDTQVVLLTEIRDLLAQTNGDSPGRHGGRGTPSPTDGPRASTESQ.

Transmembrane regions (helical) follow at residues 12-32 (GNIVDLAVAVVIGTAFTALVT) and 71-91 (VLLSAAINFFLIAFAVYFLVV). Residues 122–151 (AQTNGDSPGRHGGRGTPSPTDGPRASTESQ) form a disordered region.

The protein belongs to the MscL family. As to quaternary structure, homopentamer.

It is found in the cell membrane. Its function is as follows. Channel that opens in response to stretch forces in the membrane lipid bilayer. May participate in the regulation of osmotic pressure changes within the cell. This chain is Large-conductance mechanosensitive channel, found in Mycobacterium tuberculosis (strain CDC 1551 / Oshkosh).